A 143-amino-acid polypeptide reads, in one-letter code: MAKAIPKIGSRKKVRIGLRRNARFSLRKSARRITKGVIHVQASFNNTIITVTDPQGRVVFWSSAGTCGFKSSRKASPYAGQRTAVDAIRTVGLQRAEVMVKGAGSGRDAALRAIAKSGVRLSCIRDVTPMPHNGCRPPKKRRL.

This sequence belongs to the universal ribosomal protein uS11 family. In terms of assembly, part of the 30S ribosomal subunit.

Its subcellular location is the plastid. It localises to the chloroplast. This is Small ribosomal subunit protein uS11c from Hordeum vulgare (Barley).